We begin with the raw amino-acid sequence, 216 residues long: Protein ORM2 (216 aa).

Residues 1 to 50 (MIDRTKNESPAFEESPLTPNVSNLKPFPSQSNKISTPVTDHRRRRSSSVI) are disordered. The Cytoplasmic portion of the chain corresponds to 1 to 78 (MIDRTKNESP…NMNATWVDQR (78 aa)). Ser-9 and Ser-15 each carry phosphoserine. Residues 17–38 (LTPNVSNLKPFPSQSNKISTPV) are compositionally biased toward polar residues. Thr-18 is modified (phosphothreonine). Phosphoserine occurs at positions 22, 29, and 51. The chain crosses the membrane as a helical span at residues 79-99 (GAWLIHIVVIVLLRLFYSLFG). Topologically, residues 100–103 (STPK) are extracellular. Residues 104-124 (WTWTLTNMTYIIGFYIMFHLV) form a helical membrane-spanning segment. Over 125–148 (KGTPFDFNGGAYDNLTMWEQINDE) the chain is Cytoplasmic. A helical membrane pass occupies residues 149–169 (TLYTPTRKFLLIVPIVLFLIS). The Extracellular segment spans residues 170–177 (NQYYRNDM). A helical transmembrane segment spans residues 178 to 198 (TLFLSNLAVTVLIGVVPKLGI). At 199-216 (THRLRISIPGITGRAQIS) the chain is on the cytoplasmic side.

It belongs to the ORM family. As to quaternary structure, component of the SPOTS complex, at least composed of LCB1/2 (LCB1 and/or LCB2), ORM1/2 (ORM1 and/or ORM2), SAC1 and TSC3. Post-translationally, phosphorylated in case of disruption of sphingolipid synthesis. Phosphorylation regulates the inhibitory activity of serine palmitoyltransferases (LCB1 and LCB2).

The protein resides in the endoplasmic reticulum membrane. Functionally, component of the SPOTS complex that acts as a negative regulator of sphingolipid synthesis. Acts by inhibiting serine palmitoyltransferases (LCB1 and LCB2) activity. Along with ORM1, plays a role in the phosphorylation of LAC1 and YPK1, the distribution of actin patches between mother and daughter cells, and in endocytosis. The polypeptide is Protein ORM2 (ORM2) (Saccharomyces cerevisiae (strain ATCC 204508 / S288c) (Baker's yeast)).